The following is a 52-amino-acid chain: Alpha-crystallin B chain (52 aa).

The protein belongs to the small heat shock protein (HSP20) family. As to quaternary structure, homodimer. Aggregates with homologous proteins, including alpha-A-crystallin and the small heat shock protein HSPB1, to form large heteromeric complexes.

Its function is as follows. May contribute to the transparency and refractive index of the lens. The protein is Alpha-crystallin B chain (CRYAB) of Trachemys scripta elegans (Red-eared slider turtle).